Consider the following 689-residue polypeptide: Glycine--tRNA ligase beta subunit (689 aa).

It belongs to the class-II aminoacyl-tRNA synthetase family. Tetramer of two alpha and two beta subunits.

Its subcellular location is the cytoplasm. The enzyme catalyses tRNA(Gly) + glycine + ATP = glycyl-tRNA(Gly) + AMP + diphosphate. This is Glycine--tRNA ligase beta subunit from Yersinia enterocolitica serotype O:8 / biotype 1B (strain NCTC 13174 / 8081).